Reading from the N-terminus, the 1024-residue chain is Multidrug resistance protein MdtC (1024 aa).

A run of 12 helical transmembrane segments spans residues 12–32, 333–353, 360–380, 387–407, 435–455, 469–489, 528–548, 853–873, 875–895, 897–917, 953–973, and 984–1004; these read VATTLLTLAITLSGIIGFSLL, EVERSLVIAVALVILVVFIFL, LIPAVAVPVSLIGTFAAMYLC, LSLMALTIATGFVVDDAIVVL, VLSMSISLVAVFIPLLLMAGL, VAIGISLVISLTLTPMMCAWL, WVMVVLLSTIALNVWLYISIP, LWLIMAAIATVYIVLGILYES, VHPLTILSTLPSAGVGALLAL, LFDAPFSLIALIGIMLLIGIV, PIIMTTLAALFGALPLVLSSG, and ITIVGGLVVSQLLTLYTTPVI.

The protein belongs to the resistance-nodulation-cell division (RND) (TC 2.A.6) family. MdtC subfamily. In terms of assembly, part of a tripartite efflux system composed of MdtA, MdtB and MdtC. MdtC forms a heteromultimer with MdtB.

The protein localises to the cell inner membrane. The chain is Multidrug resistance protein MdtC from Yersinia pseudotuberculosis serotype O:1b (strain IP 31758).